Here is a 213-residue protein sequence, read N- to C-terminus: MTIRHHVSDALLTAYAAGTLSEAFSLVVATHLSLCDECRARAGALDAVGGSLMEETAPVALSEGSLASVMAQLDRQIQRPAPARRADPRAPAPLADYVGRRLEDVRWRTLGGGVRQAILPTGGEAIARLLWIPGGQAVPDHGHRGLELTLVLQGAFRDETDRFGAGDIEIADQELEHTPVAERGLDCICLAATDAPLRFNSFLPKLVQPFFRI.

The interval T2–R85 is sufficient to bind sigma factor and inhibit its activity. Zn(2+)-binding residues include H6, H31, C35, C38, H141, H143, E147, and H177. The segment at A86–D194 is required for response to singlet oxygen.

The protein belongs to the zinc-associated anti-sigma factor (ZAS) superfamily. As to quaternary structure, forms a 1:1 complex with cognate ECF RNA polymerase sigma factor RpoE; this inhibits the interaction of RpoE with the RNA polymerase catalytic core. The cofactor is Zn(2+).

Anti-sigma factor that inhibits the activity of the extracytoplasmic function (ECF) sigma-E factor (RpoE), thereby indirectly regulating the transcription of the cycA and rpoE genes. ECF sigma factors are held in an inactive form by a cognate anti-sigma factor. This Cereibacter sphaeroides (strain ATCC 17023 / DSM 158 / JCM 6121 / CCUG 31486 / LMG 2827 / NBRC 12203 / NCIMB 8253 / ATH 2.4.1.) (Rhodobacter sphaeroides) protein is Anti-sigma-E factor ChrR (chrR).